The sequence spans 452 residues: Trigger factor (452 aa).

In terms of domain architecture, PPIase FKBP-type spans 171–256 (GDRVTISFKG…ATKVEAPQDT (86 aa)).

Belongs to the FKBP-type PPIase family. Tig subfamily.

It localises to the cytoplasm. The catalysed reaction is [protein]-peptidylproline (omega=180) = [protein]-peptidylproline (omega=0). Its function is as follows. Involved in protein export. Acts as a chaperone by maintaining the newly synthesized protein in an open conformation. Functions as a peptidyl-prolyl cis-trans isomerase. The sequence is that of Trigger factor from Rhodopseudomonas palustris (strain HaA2).